Consider the following 780-residue polypeptide: E3 UFM1-protein ligase 1 homolog (780 aa).

Positions 403–413 are enriched in polar residues; sequence STSSTNPNHST. 2 disordered regions span residues 403–458 and 734–760; these read STSS…RSHI and SSDK…NIDL. Basic and acidic residues-rich tracts occupy residues 443 to 458 and 736 to 750; these read KDRS…RSHI and DKQK…KDSD.

The protein belongs to the UFL1 family.

Its function is as follows. E3 UFM1-protein ligase that mediates ufmylation of target proteins. The polypeptide is E3 UFM1-protein ligase 1 homolog (Trichoplax adhaerens (Trichoplax reptans)).